A 682-amino-acid polypeptide reads, in one-letter code: uncharacterized protein (682 aa).

In terms of domain architecture, MCM spans 284–487 (VVNILADRLI…KDKDIAEYIV (204 aa)). 329-336 (TDPGIGKT) serves as a coordination point for ATP.

Belongs to the MCM family.

This is an uncharacterized protein from Methanocaldococcus jannaschii (strain ATCC 43067 / DSM 2661 / JAL-1 / JCM 10045 / NBRC 100440) (Methanococcus jannaschii).